The primary structure comprises 571 residues: Oxysterol-binding protein 11 (571 aa).

The interval M1–D73 is disordered. A compositionally biased stretch (polar residues) spans N33–A42. A compositionally biased stretch (low complexity) spans S43–D54. Residues Y387–I420 adopt a coiled-coil conformation.

It belongs to the OSBP family.

The polypeptide is Oxysterol-binding protein 11 (osbK) (Dictyostelium discoideum (Social amoeba)).